Reading from the N-terminus, the 532-residue chain is Probable pectinesterase/pectinesterase inhibitor 39 (532 aa).

An N-terminal signal peptide occupies residues 1–34 (MINNHPIREKPKHIIFNLLSLIFFLIFLSTVVSS). The pectinesterase inhibitor 39 stretch occupies residues 35–169 (QSPSYTTHKT…ENLKEIILDI (135 aa)). N-linked (GlcNAc...) asparagine glycosylation is found at Asn-62, Asn-74, Asn-85, Asn-172, Asn-221, Asn-231, Asn-244, and Asn-287. The segment at 221-518 (NLSVAIDGTG…FTVGPFIDGS (298 aa)) is pectinesterase 39. Substrate-binding residues include Thr-296 and Gln-326. Asp-349 serves as the catalytic Proton donor; for pectinesterase activity. Asp-370 (nucleophile; for pectinesterase activity) is an active-site residue. 2 N-linked (GlcNAc...) asparagine glycosylation sites follow: Asn-382 and Asn-404. Residues Arg-438 and Trp-440 each coordinate substrate. N-linked (GlcNAc...) asparagine glycans are attached at residues Asn-502 and Asn-522.

It in the N-terminal section; belongs to the PMEI family. In the C-terminal section; belongs to the pectinesterase family. As to expression, expressed in siliques but not in flower buds.

It is found in the secreted. It localises to the cell wall. It catalyses the reaction [(1-&gt;4)-alpha-D-galacturonosyl methyl ester](n) + n H2O = [(1-&gt;4)-alpha-D-galacturonosyl](n) + n methanol + n H(+). It functions in the pathway glycan metabolism; pectin degradation; 2-dehydro-3-deoxy-D-gluconate from pectin: step 1/5. Its function is as follows. Acts in the modification of cell walls via demethylesterification of cell wall pectin. The chain is Probable pectinesterase/pectinesterase inhibitor 39 (PME39) from Arabidopsis thaliana (Mouse-ear cress).